The following is a 197-amino-acid chain: dTTP/UTP pyrophosphatase (197 aa).

The active-site Proton acceptor is the Asp70.

Belongs to the Maf family. YhdE subfamily. Requires a divalent metal cation as cofactor.

The protein localises to the cytoplasm. The enzyme catalyses dTTP + H2O = dTMP + diphosphate + H(+). It catalyses the reaction UTP + H2O = UMP + diphosphate + H(+). In terms of biological role, nucleoside triphosphate pyrophosphatase that hydrolyzes dTTP and UTP. May have a dual role in cell division arrest and in preventing the incorporation of modified nucleotides into cellular nucleic acids. In Methanosarcina barkeri (strain Fusaro / DSM 804), this protein is dTTP/UTP pyrophosphatase.